The primary structure comprises 253 residues: Ribulose bisphosphate carboxylase large chain (253 aa).

Positions 35 and 85 each coordinate substrate. K87 serves as the catalytic Proton acceptor. Position 89 (K89) interacts with substrate. Residues K113, D115, and E116 each contribute to the Mg(2+) site. K113 is subject to N6-carboxylysine. H206 functions as the Proton acceptor in the catalytic mechanism. Residues R207 and H239 each contribute to the substrate site.

Belongs to the RuBisCO large chain family. Type I subfamily. In terms of assembly, heterohexadecamer of 8 large chains and 8 small chains; disulfide-linked. The disulfide link is formed within the large subunit homodimers. Mg(2+) serves as cofactor. Post-translationally, the disulfide bond which can form in the large chain dimeric partners within the hexadecamer appears to be associated with oxidative stress and protein turnover.

It is found in the plastid. The protein localises to the chloroplast. The catalysed reaction is 2 (2R)-3-phosphoglycerate + 2 H(+) = D-ribulose 1,5-bisphosphate + CO2 + H2O. It carries out the reaction D-ribulose 1,5-bisphosphate + O2 = 2-phosphoglycolate + (2R)-3-phosphoglycerate + 2 H(+). Functionally, ruBisCO catalyzes two reactions: the carboxylation of D-ribulose 1,5-bisphosphate, the primary event in carbon dioxide fixation, as well as the oxidative fragmentation of the pentose substrate in the photorespiration process. Both reactions occur simultaneously and in competition at the same active site. This is Ribulose bisphosphate carboxylase large chain (rbcL) from Magnolia latahensis (Apocynophyllum latahense).